The sequence spans 236 residues: Small ribosomal subunit protein uS2c (236 aa).

It belongs to the universal ribosomal protein uS2 family.

The protein localises to the plastid. It localises to the chloroplast. This Triticum aestivum (Wheat) protein is Small ribosomal subunit protein uS2c (rps2).